The chain runs to 478 residues: Dynein regulatory complex subunit 4 (478 aa).

A compositionally biased stretch (basic residues) spans 1-12; that stretch reads MAPKKKGKKGKA. The tract at residues 1 to 33 is disordered; the sequence is MAPKKKGKKGKAKGTPIVDGLAPEDMSKEQVEE. The regulates microtubule-binding stretch occupies residues 1 to 114; sequence MAPKKKGKKG…LLYEHQNNLT (114 aa). Residues 115–258 form a microtubule-binding region; that stretch reads EMKAEGTVVM…NSLKEQMEDM (144 aa). A coiled-coil region spans residues 242–427; sequence LNNLALINSL…KDLQYELAQV (186 aa). Residues 357 to 478 are interaction with SMO; it reads QQKTGFKNLV…GPAGLVGTPT (122 aa).

This sequence belongs to the DRC4 family. Component of the nexin-dynein regulatory complex (N-DRC). Interacts with microtubules. Interacts with SMO. Interacts (via coiled-coil domains) with RAB3B (in GTP-bound form). Interacts with DRC1. Interacts with DRC7. As to expression, expressed in respiratory epithelial cells (at protein level). Expressed in the heart, skeletal muscle, pancreas, liver, brain, trachea and lung. Weakly or not expressed in placenta and kidney.

The protein localises to the cytoplasm. Its subcellular location is the cytoskeleton. It is found in the cell projection. The protein resides in the cilium. It localises to the flagellum. The protein localises to the cilium axoneme. Its subcellular location is the cilium basal body. It is found in the golgi apparatus. The protein resides in the flagellum axoneme. Its function is as follows. Component of the nexin-dynein regulatory complex (N-DRC), a key regulator of ciliary/flagellar motility which maintains the alignment and integrity of the distal axoneme and regulates microtubule sliding in motile axonemes. Plays an important role in the assembly of the N-DRC linker. Plays dual roles at both the primary (or non-motile) cilia to regulate hedgehog signaling and in motile cilia to coordinate cilia movement. Required for proper motile cilia functioning. Positively regulates ciliary smoothened (SMO)-dependent Hedgehog (Hh) signaling pathway by facilitating the trafficking of SMO into the cilium and the stimulation of SMO activity in a GRK2-dependent manner. The polypeptide is Dynein regulatory complex subunit 4 (GAS8) (Homo sapiens (Human)).